The chain runs to 267 residues: tRNA (guanine-N(1)-)-methyltransferase (267 aa).

S-adenosyl-L-methionine-binding positions include Gly-112 and 131–136 (IGDYIL). Basic and acidic residues predominate over residues 245-259 (DRRKEKNSYEDEFNR). The interval 245–267 (DRRKEKNSYEDEFNRRNYKRSTS) is disordered.

This sequence belongs to the RNA methyltransferase TrmD family. In terms of assembly, homodimer.

The protein resides in the cytoplasm. The catalysed reaction is guanosine(37) in tRNA + S-adenosyl-L-methionine = N(1)-methylguanosine(37) in tRNA + S-adenosyl-L-homocysteine + H(+). Its function is as follows. Specifically methylates guanosine-37 in various tRNAs. In Spiroplasma kunkelii, this protein is tRNA (guanine-N(1)-)-methyltransferase.